A 76-amino-acid chain; its full sequence is uncharacterized protein (76 aa).

Residues 1–24 (MPLRLCQGRKDRASDPVRDDGSPP) are disordered. Residues 8 to 22 (GRKDRASDPVRDDGS) are compositionally biased toward basic and acidic residues.

This is an uncharacterized protein from Dryophytes versicolor (chameleon treefrog).